Here is a 661-residue protein sequence, read N- to C-terminus: PAN2-PAN3 deadenylation complex subunit PAN3 (661 aa).

Disordered regions lie at residues 1–26 and 53–130; these read MASA…AREN and DPHK…LRQD. The C3H1-type zinc-finger motif lies at 26-55; that stretch reads NAKDTLCRNITIYGRCRYEDKGCAFNHDPH. Positions 75-102 are enriched in low complexity; that stretch reads SFTPSLLSSNGSSPTSTPATTKKMTTIS. Positions 115-130 are enriched in polar residues; the sequence is SVVSRSNASTPGLRQD. The tract at residues 263-524 is pseudokinase domain; that stretch reads QTLPNTQLPA…NIDIFITGIS (262 aa). Residues arginine 315, 364–371, and 424–425 each bind ATP; these read DYHPLSKT and SK. The stretch at 525–563 forms a coiled coil; that stretch reads SQLMSTFDSALHLDDQLTSDLSRELENGRLVRLMTKLNF. The interval 564 to 661 is knob domain; sequence VNERPEYEHD…ALMKPARRMH (98 aa).

The protein belongs to the protein kinase superfamily. PAN3 family. Homodimer. Forms a heterotrimer with a catalytic subunit pan2 to form the poly(A)-nuclease (PAN) deadenylation complex. Interacts (via PAM-2 motif) with poly(A)-binding protein pab1 (via PABC domain), conferring substrate specificity of the enzyme complex.

Its subcellular location is the cytoplasm. In terms of biological role, regulatory subunit of the poly(A)-nuclease (PAN) deadenylation complex, one of two cytoplasmic mRNA deadenylases involved in mRNA turnover. PAN specifically shortens poly(A) tails of RNA and the activity is stimulated by poly(A)-binding protein pab1. PAN deadenylation is followed by rapid degradation of the shortened mRNA tails by the CCR4-NOT complex. Deadenylated mRNAs are then degraded by two alternative mechanisms, namely exosome-mediated 3'-5' exonucleolytic degradation, or deadenylation-dependent mRNA decaping and subsequent 5'-3' exonucleolytic degradation by xrn1. May also be involved in post-transcriptional maturation of mRNA poly(A) tails. pan3 acts as a positive regulator for PAN activity, recruiting the catalytic subunit pan2 to mRNA via its interaction with RNA and with pab1. This Neosartorya fischeri (strain ATCC 1020 / DSM 3700 / CBS 544.65 / FGSC A1164 / JCM 1740 / NRRL 181 / WB 181) (Aspergillus fischerianus) protein is PAN2-PAN3 deadenylation complex subunit PAN3.